The sequence spans 171 residues: Small ribosomal subunit protein uS4 (171 aa).

Residues 101–165 enclose the S4 RNA-binding domain; that stretch reads RRLQTVVYRK…SSLSDELHPE (65 aa). Residues 148–171 are disordered; that stretch reads SSVGFDEHSSLSDELHPERAEAQE. Positions 152–171 are enriched in basic and acidic residues; it reads FDEHSSLSDELHPERAEAQE.

It belongs to the universal ribosomal protein uS4 family. As to quaternary structure, part of the 30S ribosomal subunit. Contacts protein S5. The interaction surface between S4 and S5 is involved in control of translational fidelity.

Functionally, one of the primary rRNA binding proteins, it binds directly to 16S rRNA where it nucleates assembly of the body of the 30S subunit. With S5 and S12 plays an important role in translational accuracy. This chain is Small ribosomal subunit protein uS4, found in Haloarcula marismortui (strain ATCC 43049 / DSM 3752 / JCM 8966 / VKM B-1809) (Halobacterium marismortui).